Here is an 892-residue protein sequence, read N- to C-terminus: MAVERLSSNSEMKSLTGEEIRAAFLNFYAERGHEIVPSASLVPNDPTVLLTIAGMLPFKPVFLGHQDRPSARVTSCQKCIRTNDIENVGRTARHHTFFEMLGNFSFGDYFKKEAIQWAWELSINVFGLNPSHIVISIFREDDEAEQIWRDVIGVNPRRIIRMDEKDNFWSSGPTGPCGPCSELYYDFHPELGEEEIDLEDDTRFIEFYNLVFMQYNRNSSGTLTSLANCNIDTGMGLERMAQILQGVANNYETDLIYPLLEKIASLIDVQYEDLNATIKASFKVIGDHTRACVHLIGDGVSASNLGRGYVLRRLLRRVVRHGRLIGITKPFLVQIAEVAIELMQSAYPQLLERRQLIFKELQREETRFLETLEKGEKLLAELLSKAPSVITGEAAFELYDTYGFPVELTEEIAEENDLRVDMKGFKKAMDEQRRRAKSAAMTIDLTLQDTIDKVVSEVGETNFLGYQQLEQFSQVQAIVVNGVSSQECNVGDKIDIVLNMTPFYGEGGGQIGDRGIISSASSDDSECLIEIDSVRRVKGAFVHSGLVKNGVLTLGDNVQCTVDSFSRRCAQANHTATHLLQAALKKAVDSDITQAGSLVDFDRLRFDFHFVRPVSGAELEHIEKLINGWISEAHSLVISEMSINEAKRVGAIAMFGEKYGEVVRVVDVPGVSKELCGGTHVTNTAEIGLFKIVSETGIAAGIRRIEAIAGQGVLDYLNDRDGVVKILSERFKAQSNEIVDRVIALQDEVKSLTKLLVKAQDEVAFTKALSLKNKVVSLTNSQYLIERLDGVTGDAIQSVVKTLVDELGDNAAVVLAGMPDLNDQKKVILVAAFGSEIIAQGLHAGQFLGPIAEICGGGGGGRPNFAQAGGRDPTKLDDALDLAKERIIQSLD.

Positions 574, 578, 676, and 680 each coordinate Zn(2+).

This sequence belongs to the class-II aminoacyl-tRNA synthetase family. Requires Zn(2+) as cofactor.

Its subcellular location is the cytoplasm. The enzyme catalyses tRNA(Ala) + L-alanine + ATP = L-alanyl-tRNA(Ala) + AMP + diphosphate. Catalyzes the attachment of alanine to tRNA(Ala) in a two-step reaction: alanine is first activated by ATP to form Ala-AMP and then transferred to the acceptor end of tRNA(Ala). Also edits incorrectly charged Ser-tRNA(Ala) and Gly-tRNA(Ala) via its editing domain. This chain is Alanine--tRNA ligase, found in Prochlorococcus marinus (strain SARG / CCMP1375 / SS120).